An 856-amino-acid chain; its full sequence is Valine--tRNA ligase (856 aa).

The 'HIGH' region motif lies at Pro-47–His-57. Positions Lys-578–Ser-582 match the 'KMSKS' region motif. Lys-581 lines the ATP pocket.

Belongs to the class-I aminoacyl-tRNA synthetase family. ValS type 2 subfamily. As to quaternary structure, monomer.

The protein resides in the cytoplasm. The catalysed reaction is tRNA(Val) + L-valine + ATP = L-valyl-tRNA(Val) + AMP + diphosphate. Catalyzes the attachment of valine to tRNA(Val). As ValRS can inadvertently accommodate and process structurally similar amino acids such as threonine, to avoid such errors, it has a 'posttransfer' editing activity that hydrolyzes mischarged Thr-tRNA(Val) in a tRNA-dependent manner. The polypeptide is Valine--tRNA ligase (Tropheryma whipplei (strain Twist) (Whipple's bacillus)).